The chain runs to 132 residues: S-adenosylmethionine decarboxylase proenzyme (132 aa).

S65 acts as the Schiff-base intermediate with substrate; via pyruvic acid in catalysis. S65 carries the pyruvic acid (Ser); by autocatalysis modification. H70 (proton acceptor; for processing activity) is an active-site residue. C85 acts as the Proton donor; for catalytic activity in catalysis.

Belongs to the prokaryotic AdoMetDC family. Type 1 subfamily. In terms of assembly, heterotetramer of two alpha and two beta chains arranged as a dimer of alpha/beta heterodimers. Pyruvate is required as a cofactor. Is synthesized initially as an inactive proenzyme. Formation of the active enzyme involves a self-maturation process in which the active site pyruvoyl group is generated from an internal serine residue via an autocatalytic post-translational modification. Two non-identical subunits are generated from the proenzyme in this reaction, and the pyruvate is formed at the N-terminus of the alpha chain, which is derived from the carboxyl end of the proenzyme. The post-translation cleavage follows an unusual pathway, termed non-hydrolytic serinolysis, in which the side chain hydroxyl group of the serine supplies its oxygen atom to form the C-terminus of the beta chain, while the remainder of the serine residue undergoes an oxidative deamination to produce ammonia and the pyruvoyl group blocking the N-terminus of the alpha chain.

It catalyses the reaction S-adenosyl-L-methionine + H(+) = S-adenosyl 3-(methylsulfanyl)propylamine + CO2. The protein operates within amine and polyamine biosynthesis; S-adenosylmethioninamine biosynthesis; S-adenosylmethioninamine from S-adenosyl-L-methionine: step 1/1. Its function is as follows. Catalyzes the decarboxylation of S-adenosylmethionine to S-adenosylmethioninamine (dcAdoMet), the propylamine donor required for the synthesis of the polyamines spermine and spermidine from the diamine putrescine. The chain is S-adenosylmethionine decarboxylase proenzyme from Symbiobacterium thermophilum (strain DSM 24528 / JCM 14929 / IAM 14863 / T).